We begin with the raw amino-acid sequence, 428 residues long: Glutamine synthetase, chloroplastic (428 aa).

A chloroplast-targeting transit peptide spans 1–49 (MAQILAASPTCQMRLTKPSSIASSKLWNSVVLKQKKQSSSKVRSFKVMA). The GS beta-grasp domain maps to 75–155 (IIAEYIWIGG…VICDTYTPAG (81 aa)). The interval 94 to 120 (RTLEKPVEDPSELPKWNYDGSSTGQAP) is disordered. At serine 104 the chain carries Phosphoserine. The GS catalytic domain occupies 159 to 428 (PTNKRARAAE…LAAQKLSLKV (270 aa)).

This sequence belongs to the glutamine synthetase family. As to quaternary structure, homooctamer.

Its subcellular location is the plastid. The protein localises to the chloroplast. The catalysed reaction is L-glutamate + NH4(+) + ATP = L-glutamine + ADP + phosphate + H(+). The light-modulated chloroplast enzyme, encoded by a nuclear gene and expressed primarily in leaves, is responsible for the reassimilation of the ammonia generated by photorespiration. This is Glutamine synthetase, chloroplastic (GLN2) from Brassica napus (Rape).